A 156-amino-acid polypeptide reads, in one-letter code: Ribosome maturation factor RimP (156 aa).

Belongs to the RimP family.

It is found in the cytoplasm. Its function is as follows. Required for maturation of 30S ribosomal subunits. In Dictyoglomus thermophilum (strain ATCC 35947 / DSM 3960 / H-6-12), this protein is Ribosome maturation factor RimP.